A 248-amino-acid polypeptide reads, in one-letter code: 4-hydroxy-tetrahydrodipicolinate reductase (248 aa).

Residues 9 to 14 (GAKGRV), 77 to 79 (GTT), and 104 to 107 (APNF) each bind NAD(+). Residue His134 is the Proton donor/acceptor of the active site. (S)-2,3,4,5-tetrahydrodipicolinate is bound at residue His135. Lys138 acts as the Proton donor in catalysis. Position 144-145 (144-145 (GT)) interacts with (S)-2,3,4,5-tetrahydrodipicolinate.

It belongs to the DapB family.

Its subcellular location is the cytoplasm. It carries out the reaction (S)-2,3,4,5-tetrahydrodipicolinate + NAD(+) + H2O = (2S,4S)-4-hydroxy-2,3,4,5-tetrahydrodipicolinate + NADH + H(+). It catalyses the reaction (S)-2,3,4,5-tetrahydrodipicolinate + NADP(+) + H2O = (2S,4S)-4-hydroxy-2,3,4,5-tetrahydrodipicolinate + NADPH + H(+). It participates in amino-acid biosynthesis; L-lysine biosynthesis via DAP pathway; (S)-tetrahydrodipicolinate from L-aspartate: step 4/4. In terms of biological role, catalyzes the conversion of 4-hydroxy-tetrahydrodipicolinate (HTPA) to tetrahydrodipicolinate. The protein is 4-hydroxy-tetrahydrodipicolinate reductase of Corynebacterium glutamicum (strain ATCC 13032 / DSM 20300 / JCM 1318 / BCRC 11384 / CCUG 27702 / LMG 3730 / NBRC 12168 / NCIMB 10025 / NRRL B-2784 / 534).